A 112-amino-acid polypeptide reads, in one-letter code: uncharacterized protein (112 aa).

Helical transmembrane passes span P7–Y26 and T36–Y58.

It is found in the membrane. This is an uncharacterized protein from Saccharomyces cerevisiae (strain ATCC 204508 / S288c) (Baker's yeast).